Here is a 296-residue protein sequence, read N- to C-terminus: Ribonuclease HIII (296 aa).

The region spanning 80–296 is the RNase H type-2 domain; the sequence is LALIGSDEVG…NTKKAYQRLK (217 aa). The a divalent metal cation site is built by Asp86, Glu87, and Asp191.

It belongs to the RNase HII family. RnhC subfamily. The cofactor is Mn(2+). It depends on Mg(2+) as a cofactor.

It is found in the cytoplasm. It catalyses the reaction Endonucleolytic cleavage to 5'-phosphomonoester.. Its function is as follows. Endonuclease that specifically degrades the RNA of RNA-DNA hybrids. The protein is Ribonuclease HIII of Streptococcus thermophilus (strain CNRZ 1066).